The primary structure comprises 528 residues: Acid-sensing ion channel 1 (528 aa).

Residues 1-49 lie on the Cytoplasmic side of the membrane; sequence MELKAEEEEVGGVQPVSIQAFASSSTLHGLAHIFSYERLSLKRALWALC. A helical transmembrane segment spans residues 50 to 66; that stretch reads FLGSLAVLLCVCTERVQ. Over 67-427 the chain is Extracellular; that stretch reads YYFHYHHVTK…ETIEQKKAYE (361 aa). Intrachain disulfides connect cysteine 93–cysteine 194, cysteine 172–cysteine 179, cysteine 290–cysteine 367, cysteine 310–cysteine 363, cysteine 314–cysteine 361, cysteine 323–cysteine 345, and cysteine 325–cysteine 337. N-linked (GlcNAc...) asparagine glycosylation is found at asparagine 368 and asparagine 395. A discontinuously helical membrane pass occupies residues 428–458; the sequence is IAGLLGDIGGQMGLFIGASILTVLELFDYAY. Positions 444 to 446 match the GAS motif; ion selectivity filter motif; sequence GAS. Residues 459–528 are Cytoplasmic-facing; the sequence is EVIKHKLCRR…ARGTFEDFTC (70 aa). Serine 479 bears the Phosphoserine; by PKA mark. Serine 499 is modified (phosphoserine).

It belongs to the amiloride-sensitive sodium channel (TC 1.A.6) family. ASIC1 subfamily. As to quaternary structure, forms functional homotrimeric channels. Forms heterotrimers with other ASIC proteins, resulting in channels with distinct properties. Interacts with PICK1; regulates ASIC1 clustering in membranes. Interacts with STOM; alters heterotrimeric channels activity. PH-gating could be regulated by serine proteases. Post-translationally, phosphorylation by PKA regulates interaction with PICK1 and subcellular localization. Phosphorylation by PKC may regulate the channel. In terms of tissue distribution, expressed in neurons throughout the central and peripheral nervous system.

Its subcellular location is the cell membrane. It is found in the postsynaptic cell membrane. It localises to the cell projection. The protein resides in the dendrite. The catalysed reaction is Na(+)(in) = Na(+)(out). The enzyme catalyses K(+)(in) = K(+)(out). It catalyses the reaction Li(+)(in) = Li(+)(out). It carries out the reaction Ca(2+)(in) = Ca(2+)(out). With respect to regulation, potentiated by FMRFamide-related neuropeptides, which are induced during inflammation and modulate pain responses. Inhibited by the diuretic drug amiloride. Spider venom psalmotoxin-1 inhibits the channel by locking it in its desensitized conformation. The homotrimeric channel is inhibited by the spider venom pi-theraphotoxin-Hm3a. Homotrimeric and heterotrimeric (with ASIC2 isoform 1) channels are inhibited by the snake venom mambalgin-1, which prevents proton-induced transitions from the resting closed state to the active and/or desensitized states. Inhibited by Texas coral snake toxin MitTx1. In terms of biological role, forms voltage-independent, pH-gated trimeric sodium channels that act as postsynaptic excitatory receptors in the nervous system, playing a crucial role in regulating synaptic plasticity, learning, and memory. Upon extracellular pH drop this channel elicits transient, fast activating, and completely desensitizing inward currents. Displays high selectivity for sodium ions but can also permit the permeation of other cations. Regulates more or less directly intracellular calcium concentration and CaMKII phosphorylation, and thereby the density of dendritic spines. Modulates neuronal activity in the circuits underlying innate fear. Functionally, has high selectivity for sodium ions, but can also be permeable to other cations including calcium, lithium and potassium. Produces acid activated currents with a reduced amplitude and inactivates faster. Has high selectivity for sodium ions but also supports a calcium-mediated current which is sustained and maintained as long as acidic conditions are present. Also potentially permeable to lithium and potassium. Its function is as follows. Has no measurable proton-gated sodium channel activity in vitro. In Homo sapiens (Human), this protein is Acid-sensing ion channel 1.